A 142-amino-acid chain; its full sequence is Large ribosomal subunit protein uL11 (142 aa).

Belongs to the universal ribosomal protein uL11 family. Part of the ribosomal stalk of the 50S ribosomal subunit. Interacts with L10 and the large rRNA to form the base of the stalk. L10 forms an elongated spine to which L12 dimers bind in a sequential fashion forming a multimeric L10(L12)X complex. One or more lysine residues are methylated.

Forms part of the ribosomal stalk which helps the ribosome interact with GTP-bound translation factors. In Pseudoalteromonas translucida (strain TAC 125), this protein is Large ribosomal subunit protein uL11.